The sequence spans 245 residues: Orotidine 5'-phosphate decarboxylase (245 aa).

Residues aspartate 22, lysine 44, 71 to 80, threonine 131, arginine 192, glutamine 201, glycine 221, and arginine 222 each bind substrate; that span reads DLKFHDIPNT. Catalysis depends on lysine 73, which acts as the Proton donor.

Belongs to the OMP decarboxylase family. Type 1 subfamily. Homodimer.

It carries out the reaction orotidine 5'-phosphate + H(+) = UMP + CO2. The protein operates within pyrimidine metabolism; UMP biosynthesis via de novo pathway; UMP from orotate: step 2/2. Functionally, catalyzes the decarboxylation of orotidine 5'-monophosphate (OMP) to uridine 5'-monophosphate (UMP). The sequence is that of Orotidine 5'-phosphate decarboxylase from Salmonella typhi.